The chain runs to 235 residues: Phosphoribosylaminoimidazole-succinocarboxamide synthase (235 aa).

It belongs to the SAICAR synthetase family.

The catalysed reaction is 5-amino-1-(5-phospho-D-ribosyl)imidazole-4-carboxylate + L-aspartate + ATP = (2S)-2-[5-amino-1-(5-phospho-beta-D-ribosyl)imidazole-4-carboxamido]succinate + ADP + phosphate + 2 H(+). The protein operates within purine metabolism; IMP biosynthesis via de novo pathway; 5-amino-1-(5-phospho-D-ribosyl)imidazole-4-carboxamide from 5-amino-1-(5-phospho-D-ribosyl)imidazole-4-carboxylate: step 1/2. This is Phosphoribosylaminoimidazole-succinocarboxamide synthase from Thermococcus kodakarensis (strain ATCC BAA-918 / JCM 12380 / KOD1) (Pyrococcus kodakaraensis (strain KOD1)).